A 486-amino-acid polypeptide reads, in one-letter code: Malonate-semialdehyde dehydrogenase (486 aa).

NAD(+) contacts are provided by Phe-154, Lys-178, Glu-181, Arg-182, and Ser-231. The active-site Nucleophile is the Cys-286. Position 386 (Glu-386) interacts with NAD(+).

It belongs to the aldehyde dehydrogenase family. IolA subfamily. In terms of assembly, homotetramer.

The enzyme catalyses 3-oxopropanoate + NAD(+) + CoA + H2O = hydrogencarbonate + acetyl-CoA + NADH + H(+). It carries out the reaction 2-methyl-3-oxopropanoate + NAD(+) + CoA + H2O = propanoyl-CoA + hydrogencarbonate + NADH + H(+). The protein operates within polyol metabolism; myo-inositol degradation into acetyl-CoA; acetyl-CoA from myo-inositol: step 7/7. Catalyzes the oxidation of malonate semialdehyde (MSA) and methylmalonate semialdehyde (MMSA) into acetyl-CoA and propanoyl-CoA, respectively. Is involved in a myo-inositol catabolic pathway. Bicarbonate, and not CO2, is the end-product of the enzymatic reaction. The polypeptide is Malonate-semialdehyde dehydrogenase (Bacillus cereus (strain ATCC 10987 / NRS 248)).